Here is a 434-residue protein sequence, read N- to C-terminus: Histidinol dehydrogenase (434 aa).

NAD(+) contacts are provided by Tyr-130, Gln-188, and Asn-211. Residues Ser-237, Gln-259, and His-262 each contribute to the substrate site. Residues Gln-259 and His-262 each contribute to the Zn(2+) site. Catalysis depends on proton acceptor residues Glu-326 and His-327. Substrate is bound by residues His-327, Asp-360, Glu-414, and His-419. Position 360 (Asp-360) interacts with Zn(2+). His-419 contacts Zn(2+).

Belongs to the histidinol dehydrogenase family. As to quaternary structure, homodimer. The cofactor is Zn(2+).

The enzyme catalyses L-histidinol + 2 NAD(+) + H2O = L-histidine + 2 NADH + 3 H(+). Its pathway is amino-acid biosynthesis; L-histidine biosynthesis; L-histidine from 5-phospho-alpha-D-ribose 1-diphosphate: step 9/9. Catalyzes the sequential NAD-dependent oxidations of L-histidinol to L-histidinaldehyde and then to L-histidine. The polypeptide is Histidinol dehydrogenase (Escherichia coli O157:H7).